The following is an 892-amino-acid chain: Alanine--tRNA ligase (892 aa).

Zn(2+) is bound by residues His596, His600, Cys700, and His704.

The protein belongs to the class-II aminoacyl-tRNA synthetase family. It depends on Zn(2+) as a cofactor.

The protein resides in the cytoplasm. It catalyses the reaction tRNA(Ala) + L-alanine + ATP = L-alanyl-tRNA(Ala) + AMP + diphosphate. In terms of biological role, catalyzes the attachment of alanine to tRNA(Ala) in a two-step reaction: alanine is first activated by ATP to form Ala-AMP and then transferred to the acceptor end of tRNA(Ala). Also edits incorrectly charged Ser-tRNA(Ala) and Gly-tRNA(Ala) via its editing domain. The polypeptide is Alanine--tRNA ligase (Methanococcus vannielii (strain ATCC 35089 / DSM 1224 / JCM 13029 / OCM 148 / SB)).